A 167-amino-acid chain; its full sequence is Ribosome maturation factor RimM (167 aa).

One can recognise a PRC barrel domain in the interval 92-166 (DDEFYHTDLI…RIVADPPEGL (75 aa)).

Belongs to the RimM family. In terms of assembly, binds ribosomal protein uS19.

The protein localises to the cytoplasm. Functionally, an accessory protein needed during the final step in the assembly of 30S ribosomal subunit, possibly for assembly of the head region. Essential for efficient processing of 16S rRNA. May be needed both before and after RbfA during the maturation of 16S rRNA. It has affinity for free ribosomal 30S subunits but not for 70S ribosomes. The polypeptide is Ribosome maturation factor RimM (Ruegeria pomeroyi (strain ATCC 700808 / DSM 15171 / DSS-3) (Silicibacter pomeroyi)).